The sequence spans 299 residues: 4-sulfomuconolactone hydrolase (299 aa).

This sequence belongs to the metallo-dependent hydrolases superfamily. Sulfomuconolactone hydrolase family. Monomer. Zn(2+) is required as a cofactor.

It carries out the reaction 4-sulfomuconolactone + H2O = maleylacetate + sulfite + 2 H(+). Functionally, involved in the degradation of 4-sulfocatechol which is a central intermediate in the degradation of substituted sulfonated benzenes. Catalyzes the hydrolytical desulfonation of 4-sulfomuconolactone to yield maleylacetate. This is 4-sulfomuconolactone hydrolase from Rhizobium radiobacter (Agrobacterium tumefaciens).